A 321-amino-acid chain; its full sequence is Olfactory receptor 52P1 (321 aa).

The Extracellular portion of the chain corresponds to 1–27 (MESPNHTDVDPSVFFLLGIPGLEQFHL). The N-linked (GlcNAc...) asparagine glycan is linked to Asn-5. A helical membrane pass occupies residues 28 to 48 (WLSLPVCGLGTATIVGNITIL). The Cytoplasmic segment spans residues 49-56 (VVVATEPV). The chain crosses the membrane as a helical span at residues 57-77 (LHKPVYLFLCMLSTIDLAASV). Residues 78 to 101 (STVPKLLAIFWCGAGHISASACLA) are Extracellular-facing. A disulfide bridge connects residues Cys-99 and Cys-191. A helical transmembrane segment spans residues 102–122 (QMFFIHAFCMMESTVLLAMAF). The Cytoplasmic portion of the chain corresponds to 123–141 (DRYVAICHPLRYATILTDT). A helical transmembrane segment spans residues 142–162 (IIAHIGVAAVVRGSLLMLPCP). At 163-198 (FLIGRLNFCQSHVILHTYCEHMAVVKLACGDTRPNR) the chain is on the extracellular side. Residues 199-219 (VYGLTAALLVIGVDLFCIGLS) form a helical membrane-spanning segment. At 220–239 (YALSAQAVLRLSSHEARSKA) the chain is on the cytoplasmic side. The chain crosses the membrane as a helical span at residues 240-260 (LGTCGSHVCVILISYTPALFS). Over 261–275 (FFTHRFGHHVPVHIH) the chain is Extracellular. The chain crosses the membrane as a helical span at residues 276–296 (ILLANVYLLLPPALNPVVYGV). At 297-315 (KTKQIRKRVVRVFQSGQGM) the chain is on the cytoplasmic side.

This sequence belongs to the G-protein coupled receptor 1 family.

It is found in the cell membrane. Its function is as follows. Odorant receptor. This is Olfactory receptor 52P1 from Homo sapiens (Human).